The following is a 233-amino-acid chain: uncharacterized protein (233 aa).

A signal peptide spans 1 to 23; sequence MEIKYFLVLLVGFLLVLPSIVNP. The interval 42 to 217 is disordered; that stretch reads LDVNNPHNPN…HHHHQEASEC (176 aa). The span at 45–64 shows a compositional bias: low complexity; it reads NNPHNPNNNPHNPHNPNNNP. Residues 65-211 show a composition bias toward basic residues; it reads HHPHHLHHHH…HPHPHHHHHH (147 aa).

Its subcellular location is the secreted. This is an uncharacterized protein from Dictyostelium discoideum (Social amoeba).